Here is a 1303-residue protein sequence, read N- to C-terminus: DNA-directed RNA polymerase subunit beta' (1303 aa).

Zn(2+)-binding residues include C60, C62, C75, and C78. D535, D537, and D539 together coordinate Mg(2+). C876, C953, C960, and C963 together coordinate Zn(2+).

The protein belongs to the RNA polymerase beta' chain family. As to quaternary structure, the RNAP catalytic core consists of 2 alpha, 1 beta, 1 beta' and 1 omega subunit. When a sigma factor is associated with the core the holoenzyme is formed, which can initiate transcription. Mg(2+) is required as a cofactor. It depends on Zn(2+) as a cofactor.

The catalysed reaction is RNA(n) + a ribonucleoside 5'-triphosphate = RNA(n+1) + diphosphate. In terms of biological role, DNA-dependent RNA polymerase catalyzes the transcription of DNA into RNA using the four ribonucleoside triphosphates as substrates. The chain is DNA-directed RNA polymerase subunit beta' from Saccharopolyspora erythraea (strain ATCC 11635 / DSM 40517 / JCM 4748 / NBRC 13426 / NCIMB 8594 / NRRL 2338).